A 298-amino-acid chain; its full sequence is uncharacterized protein (298 aa).

Positions 1 to 17 are enriched in basic and acidic residues; that stretch reads MLTKSAENKRNRKDDSM. The tract at residues 1–22 is disordered; that stretch reads MLTKSAENKRNRKDDSMRPGQQ. The 61-residue stretch at 167-227 folds into the S1 motif domain; it reads NKELTGTVYR…EDGSVNLSLL (61 aa).

This is an uncharacterized protein from Bacillus subtilis (strain 168).